Here is a 640-residue protein sequence, read N- to C-terminus: EF-hand domain-containing protein 1 (640 aa).

Residues 1-45 (MVSNPVHGLPFLPGTSFKDSTKTAFHRSQTLSYRNGYAIVRRPTV) form a required for its localization in the mitotic spindle and interaction with alpha-tubulin region. DM10 domains follow at residues 93–198 (DKKV…ESQG), 239–359 (DKQV…KEKF), and 416–520 (DNKV…ESNA). Residues 535–554 (VRKREAPAPEAESKQTEKDP) form a disordered region. Over residues 538–554 (REAPAPEAESKQTEKDP) the composition is skewed to basic and acidic residues. Positions 574-609 (SCKDNIREAFQIYDKEASGYVDRDMFFKICESLNVP) constitute an EF-hand domain.

Microtubule inner protein component of sperm flagellar doublet microtubules. Interacts with the C-terminus of CACNA1E. Interacts with alpha-tubulin. In terms of tissue distribution, widely expressed. Not detected in lymphocytes.

The protein resides in the cytoplasm. The protein localises to the cytoskeleton. It is found in the cilium axoneme. Its subcellular location is the flagellum axoneme. It localises to the microtubule organizing center. The protein resides in the centrosome. The protein localises to the spindle. It is found in the spindle pole. In terms of biological role, microtubule inner protein (MIP) part of the dynein-decorated doublet microtubules (DMTs) in cilia axoneme, which is required for motile cilia beating. Microtubule-associated protein which regulates cell division and neuronal migration during cortical development. Necessary for radial and tangential cell migration during brain development, possibly acting as a regulator of cell morphology and process formation during migration. May enhance calcium influx through CACNA1E and stimulate programmed cell death. This chain is EF-hand domain-containing protein 1, found in Homo sapiens (Human).